We begin with the raw amino-acid sequence, 771 residues long: 5-methyltetrahydropteroyltriglutamate--homocysteine methyltransferase (771 aa).

5-methyltetrahydropteroyltri-L-glutamate is bound by residues 13–16 (RELK) and Lys-128. Residues 451–453 (IGS) and Glu-504 contribute to the L-homocysteine site. Residues 451-453 (IGS) and Glu-504 contribute to the L-methionine site. Residues 535–536 (RC) and Trp-581 contribute to the 5-methyltetrahydropteroyltri-L-glutamate site. Asp-619 lines the L-homocysteine pocket. Position 619 (Asp-619) interacts with L-methionine. Glu-625 is a 5-methyltetrahydropteroyltri-L-glutamate binding site. Zn(2+)-binding residues include His-661, Cys-663, and Glu-685. The active-site Proton donor is His-714. Zn(2+) is bound at residue Cys-746.

The protein belongs to the vitamin-B12 independent methionine synthase family. Zn(2+) is required as a cofactor.

The enzyme catalyses 5-methyltetrahydropteroyltri-L-glutamate + L-homocysteine = tetrahydropteroyltri-L-glutamate + L-methionine. It functions in the pathway amino-acid biosynthesis; L-methionine biosynthesis via de novo pathway; L-methionine from L-homocysteine (MetE route): step 1/1. Functionally, catalyzes the transfer of a methyl group from 5-methyltetrahydrofolate to homocysteine resulting in methionine formation. The protein is 5-methyltetrahydropteroyltriglutamate--homocysteine methyltransferase of Nitrobacter winogradskyi (strain ATCC 25391 / DSM 10237 / CIP 104748 / NCIMB 11846 / Nb-255).